Reading from the N-terminus, the 500-residue chain is MEVSSRPPSNFDPGNYVEMSDPTTTHLPSKVVIQDLTTELHCPLCNDWFRDPLMLTCGHNFCQDCIQSFWKVHSKETFCPDCKMLCQYSNCTFNLVLEKLVEKIKKLPLLKGHPQCPEHGENLKLFSKPEGKMICFQCKDARLSMGQSKDFLQISEAVRFFTEELAIYQSQLQTTLKELQSLRTIQKDAISAYKDNKIQLQQNLSLEFLKLHQFLHNKEKDILNDLRDEGKLLNEEMEVNLNQIQEQCLVAKDMLATIQARMEQQNSFDFLTDITKLIESMEKGMKTIVPRQLIAKKLSLGRFKGPIQYIIWKEMQAILSPGPSQLTLDPKTAHPNLVLSKSQTSVCHCDVKQVMPDDPERFDSSVAVLGSKGFTSGKWYWEIEVGKKTKWTIGVVRESIIRKGSCPLTPEQGFWLLRLRNQTDLKALDLPSRSLTLGDLRRVGVYLDYEGGQVSFYNATTMTHLYTFSSVFQEKLFPYLCPCLNDGGENKEPLHIVHPQ.

Residues 1–22 (MEVSSRPPSNFDPGNYVEMSDP) form a disordered region. The necessary for nuclear localization stretch occupies residues 1–153 (MEVSSRPPSN…SMGQSKDFLQ (153 aa)). An RING-type zinc finger spans residues 42–83 (CPLCNDWFRDPLMLTCGHNFCQDCIQSFWKVHSKETFCPDCK). A coiled-coil region spans residues 217–256 (NKEKDILNDLRDEGKLLNEEMEVNLNQIQEQCLVAKDMLA). Positions 306–500 (PIQYIIWKEM…KEPLHIVHPQ (195 aa)) constitute a B30.2/SPRY domain. S342 bears the Phosphoserine mark.

Belongs to the TRIM/RBCC family. As to quaternary structure, homo-multimer; required for antiviral activity. Interacts with PML. Post-translationally, phosphorylated. Phosphorylation is necessary for nuclear localization. As to expression, expressed in spermatid.

The protein resides in the cytoplasm. Its subcellular location is the nucleus. It is found in the nucleus speckle. The protein localises to the cytoskeleton. It localises to the microtubule organizing center. The protein resides in the centrosome. It carries out the reaction S-ubiquitinyl-[E2 ubiquitin-conjugating enzyme]-L-cysteine + [acceptor protein]-L-lysine = [E2 ubiquitin-conjugating enzyme]-L-cysteine + N(6)-ubiquitinyl-[acceptor protein]-L-lysine.. Its pathway is protein modification; protein ubiquitination. Its function is as follows. E3 ubiquitin ligase that plays an important role in antiviral immunity by restricting different viral infections including dengue virus or vesicular stomatitis indiana virus. Ubiquitinates viral proteins such as dengue virus NS3 thereby limiting infection. In addition, acts as a key mediator of type I interferon induced microtubule stabilization by directly associating to microtubules independently of its E3 ligase activity. Also plays a role in cataract formation together with TP53. Mechanistically, inhibits UVB-induced cell apoptosis and reactive oxygen species (ROS) production by inducing TP53 ubiquitination. Regulates centrosome dynamics and mitotic progression by ubiquitinating STK3/MST2; leading to its redistribution to the perinuclear cytoskeleton and subsequent phosphorylation by PLK1. The sequence is that of E3 ubiquitin-protein ligase TRIM69 (Trim69) from Mus musculus (Mouse).